A 120-amino-acid chain; its full sequence is Holo-[acyl-carrier-protein] synthase (120 aa).

Positions 8 and 58 each coordinate Mg(2+).

Belongs to the P-Pant transferase superfamily. AcpS family. Mg(2+) is required as a cofactor.

The protein resides in the cytoplasm. The enzyme catalyses apo-[ACP] + CoA = holo-[ACP] + adenosine 3',5'-bisphosphate + H(+). Transfers the 4'-phosphopantetheine moiety from coenzyme A to a Ser of acyl-carrier-protein. The sequence is that of Holo-[acyl-carrier-protein] synthase from Limosilactobacillus reuteri (strain DSM 20016) (Lactobacillus reuteri).